We begin with the raw amino-acid sequence, 293 residues long: Protease HtpX (293 aa).

A run of 2 helical transmembrane segments spans residues 4-24 and 32-52; these read IALF…VLSL and VTGL…VSLL. His-139 serves as a coordination point for Zn(2+). Glu-140 is an active-site residue. Zn(2+) is bound at residue His-143. 2 consecutive transmembrane segments (helical) span residues 158 to 178 and 193 to 213; these read VVNT…AGFL and LIYF…ASII. Glu-222 is a Zn(2+) binding site.

The protein belongs to the peptidase M48B family. Zn(2+) is required as a cofactor.

The protein resides in the cell inner membrane. The sequence is that of Protease HtpX from Cronobacter sakazakii (strain ATCC BAA-894) (Enterobacter sakazakii).